Consider the following 427-residue polypeptide: BTB/POZ domain-containing protein KCTD16 (427 aa).

The BTB domain maps to 25–98; the sequence is EVIELNVGGQ…LRDRQVVLPD (74 aa). Tyrosine 112 is modified (phosphotyrosine). Residues serine 130, serine 137, serine 143, and serine 146 each carry the phosphoserine modification.

As to quaternary structure, homopentamer; forms an open pentamer. In contrast to other BTB domain-containing proteins, does not interact with CUL3. Interacts as a tetramer with GABBR1 and GABBR2. Expressed in the brain, mainly in the hippocampus.

It is found in the presynaptic cell membrane. Its subcellular location is the postsynaptic cell membrane. Auxiliary subunit of GABA-B receptors that determine the pharmacology and kinetics of the receptor response. Increases agonist potency and markedly alter the G-protein signaling of the receptors by accelerating onset and promoting desensitization. The polypeptide is BTB/POZ domain-containing protein KCTD16 (Kctd16) (Mus musculus (Mouse)).